The sequence spans 213 residues: Probable transaldolase (213 aa).

Lys-83 acts as the Schiff-base intermediate with substrate in catalysis.

Belongs to the transaldolase family. Type 3B subfamily.

It is found in the cytoplasm. It catalyses the reaction D-sedoheptulose 7-phosphate + D-glyceraldehyde 3-phosphate = D-erythrose 4-phosphate + beta-D-fructose 6-phosphate. The protein operates within carbohydrate degradation; pentose phosphate pathway; D-glyceraldehyde 3-phosphate and beta-D-fructose 6-phosphate from D-ribose 5-phosphate and D-xylulose 5-phosphate (non-oxidative stage): step 2/3. Transaldolase is important for the balance of metabolites in the pentose-phosphate pathway. This chain is Probable transaldolase, found in Desulfitobacterium hafniense (strain DSM 10664 / DCB-2).